An 82-amino-acid chain; its full sequence is Defensin-like protein 156 (82 aa).

An N-terminal signal peptide occupies residues M1–G27. 4 disulfide bridges follow: C31-C77, C41-C60, C46-C71, and C50-C73.

This sequence belongs to the DEFL family. As to expression, expressed in flower buds, but not in stems, roots or rosette leaves.

It localises to the secreted. The polypeptide is Defensin-like protein 156 (LCR21) (Arabidopsis thaliana (Mouse-ear cress)).